The sequence spans 352 residues: uncharacterized protein (352 aa).

Positions 1–21 (MNVDSRVFRFFLVFLILVVVA) are cleaved as a signal peptide.

Belongs to the bacterial solute-binding protein 1 family. WtpA subfamily.

This is an uncharacterized protein from Methanosarcina acetivorans (strain ATCC 35395 / DSM 2834 / JCM 12185 / C2A).